The sequence spans 577 residues: Torulene dioxygenase (577 aa).

Positions Met1 to Ala20 are disordered. Positions 239, 291, 361, and 570 each coordinate Fe(2+).

The protein belongs to the carotenoid oxygenase family. The cofactor is Fe(2+).

The protein resides in the cytoplasm. It is found in the cytosol. The enzyme catalyses torulene + O2 = 4'-apo-beta-carotenal + 3-methyl-2-butenal. It participates in carotenoid biosynthesis. In terms of biological role, torulene dioxygenase; part of pathway that mediates the biosynthesis of neurosporaxanthin, a carboxylic apocarotenoid acting as an essential protective pigments and leading to orange pigmentation. CarT mediates the cleavage of torulene into beta-apo-4'-carotenal, the aldehyde corresponding to the acidic neurosporaxanthin. Is also active on other monocyclic synthetic substrates such as beta-apo-8'-carotenal and beta-apo-10'-carotenal to produce beta-apo-14'-carotenal and retinal(beta-apo-15'-carotenal), respectively. Neurosporaxanthin is synthesized from geranyl-geranyl pyrophosphate (GGPP) through several enzymatic activities. Phytoene synthase activity performed by the bifunctional enzyme carAR first produces phytoene from geranyl-geranyl pyrophosphate (GGPP). The phytoene dehydrogenase carB then introduces 4 desaturations to lead to lycopene which is substrate of the carotene cyclase activity of carAR that leads to the production of gamma-carotene. CarB then performs a 5th desaturation reaction to yield torulene. Torulene is the substrate of the dioxidase carT that breaks the molecule, removing five carbon atoms to yield beta-apo-4'-carotenal, whereas the aldehyde dehydrogenase carD mediates the last step by converting beta-apo-4'-carotenal into neurosporaxanthin. The protein is Torulene dioxygenase of Gibberella fujikuroi (strain CBS 195.34 / IMI 58289 / NRRL A-6831) (Bakanae and foot rot disease fungus).